Consider the following 474-residue polypeptide: Adenosylhomocysteinase (474 aa).

The substrate site is built by threonine 61, aspartate 136, and glutamate 196. 197 to 199 provides a ligand contact to NAD(+); sequence TTT. Substrate contacts are provided by lysine 226 and aspartate 230. Residues asparagine 231, 260-265, glutamate 283, asparagine 318, 339-341, and asparagine 384 each bind NAD(+); these read GYGDVG and IGH.

It belongs to the adenosylhomocysteinase family. NAD(+) is required as a cofactor.

It localises to the cytoplasm. It carries out the reaction S-adenosyl-L-homocysteine + H2O = L-homocysteine + adenosine. Its pathway is amino-acid biosynthesis; L-homocysteine biosynthesis; L-homocysteine from S-adenosyl-L-homocysteine: step 1/1. Its function is as follows. May play a key role in the regulation of the intracellular concentration of adenosylhomocysteine. This Ralstonia pickettii (strain 12J) protein is Adenosylhomocysteinase.